A 742-amino-acid chain; its full sequence is 5-methyltetrahydropteroyltriglutamate--homocysteine methyltransferase (742 aa).

5-methyltetrahydropteroyltri-L-glutamate contacts are provided by residues 18-21 and Lys112; that span reads REWK. Residues 420–422 and Glu473 each bind L-homocysteine; that span reads IGS. Residues 420-422 and Glu473 contribute to the L-methionine site; that span reads IGS. Trp550 provides a ligand contact to 5-methyltetrahydropteroyltri-L-glutamate. Asp588 is an L-homocysteine binding site. Position 588 (Asp588) interacts with L-methionine. Glu594 is a binding site for 5-methyltetrahydropteroyltri-L-glutamate. Zn(2+)-binding residues include His630, Cys632, and Glu654. His683 functions as the Proton donor in the catalytic mechanism. Cys715 serves as a coordination point for Zn(2+).

It belongs to the vitamin-B12 independent methionine synthase family. Zn(2+) is required as a cofactor.

The enzyme catalyses 5-methyltetrahydropteroyltri-L-glutamate + L-homocysteine = tetrahydropteroyltri-L-glutamate + L-methionine. It functions in the pathway amino-acid biosynthesis; L-methionine biosynthesis via de novo pathway; L-methionine from L-homocysteine (MetE route): step 1/1. In terms of biological role, catalyzes the transfer of a methyl group from 5-methyltetrahydrofolate to homocysteine resulting in methionine formation. This chain is 5-methyltetrahydropteroyltriglutamate--homocysteine methyltransferase, found in Staphylococcus aureus (strain Mu3 / ATCC 700698).